The sequence spans 286 residues: tRNA (guanine-N(7)-)-methyltransferase (286 aa).

4 residues coordinate S-adenosyl-L-methionine: Glu91, Glu116, Asn143, and Asp165. Asp165 is an active-site residue. Substrate is bound by residues Lys169, Asp201, and 262-265; that span reads TNFE.

The protein belongs to the class I-like SAM-binding methyltransferase superfamily. TrmB family.

It catalyses the reaction guanosine(46) in tRNA + S-adenosyl-L-methionine = N(7)-methylguanosine(46) in tRNA + S-adenosyl-L-homocysteine. The protein operates within tRNA modification; N(7)-methylguanine-tRNA biosynthesis. Functionally, catalyzes the formation of N(7)-methylguanine at position 46 (m7G46) in tRNA. This is tRNA (guanine-N(7)-)-methyltransferase from Bifidobacterium longum subsp. infantis (strain ATCC 15697 / DSM 20088 / JCM 1222 / NCTC 11817 / S12).